Here is a 205-residue protein sequence, read N- to C-terminus: Holliday junction branch migration complex subunit RuvA (205 aa).

The interval 1-65 is domain I; that stretch reads MIAKLKGILD…EDRIHLFGFL (65 aa). The segment at 66–144 is domain II; the sequence is DNTEKVAFNM…NINTIANNTS (79 aa). Positions 145–153 are flexible linker; sequence LATLSTDSN. The interval 154 to 205 is domain III; that stretch reads THDNILSDAITALIALGISRAEATQILSDIYALSPSISVNELVRTALQRRAK.

Belongs to the RuvA family. As to quaternary structure, homotetramer. Forms an RuvA(8)-RuvB(12)-Holliday junction (HJ) complex. HJ DNA is sandwiched between 2 RuvA tetramers; dsDNA enters through RuvA and exits via RuvB. An RuvB hexamer assembles on each DNA strand where it exits the tetramer. Each RuvB hexamer is contacted by two RuvA subunits (via domain III) on 2 adjacent RuvB subunits; this complex drives branch migration. In the full resolvosome a probable DNA-RuvA(4)-RuvB(12)-RuvC(2) complex forms which resolves the HJ.

It is found in the cytoplasm. Its function is as follows. The RuvA-RuvB-RuvC complex processes Holliday junction (HJ) DNA during genetic recombination and DNA repair, while the RuvA-RuvB complex plays an important role in the rescue of blocked DNA replication forks via replication fork reversal (RFR). RuvA specifically binds to HJ cruciform DNA, conferring on it an open structure. The RuvB hexamer acts as an ATP-dependent pump, pulling dsDNA into and through the RuvAB complex. HJ branch migration allows RuvC to scan DNA until it finds its consensus sequence, where it cleaves and resolves the cruciform DNA. The protein is Holliday junction branch migration complex subunit RuvA of Orientia tsutsugamushi (strain Ikeda) (Rickettsia tsutsugamushi).